The chain runs to 619 residues: ATP-dependent RNA helicase abstrakt (619 aa).

The segment covering 1–11 (MAHVKRYRRSS) has biased composition (basic residues). Disordered regions lie at residues 1–25 (MAHV…EDYV) and 50–69 (ETAQ…SQGA). Residues S11, S13, S14, S56, S57, S58, and S66 each carry the phosphoserine modification. Positions 177–205 (RSFREMKFPKGILNGLAAKGIKNPTPIQV) match the Q motif motif. The region spanning 208-392 (LPTVLAGRDL…RSALVKPVTI (185 aa)) is the Helicase ATP-binding domain. 221–228 (AFTGSGKT) serves as a coordination point for ATP. Positions 340–343 (DEAD) match the DEAD box motif. Residues 403–563 (NVTQQVEYVK…EVPDFLDELA (161 aa)) enclose the Helicase C-terminal domain. A CCHC-type zinc finger spans residues 577–594 (HGCTYCGGLGHRITECPK).

The protein belongs to the DEAD box helicase family. DDX41 subfamily.

The protein resides in the nucleus. It carries out the reaction ATP + H2O = ADP + phosphate + H(+). Its function is as follows. ATP-dependent RNA helicase. Is essential for the directed and fasciculated early outgrowth of the bolwig nerves, as well as for its navigation at later stages. Is required during post-transcriptional gene expression. Plays a role during morphogenetic process, apoptosis and the establishment of cell polarity. The polypeptide is ATP-dependent RNA helicase abstrakt (abs) (Drosophila melanogaster (Fruit fly)).